A 335-amino-acid polypeptide reads, in one-letter code: uncharacterized protein (335 aa).

A disordered region spans residues Gly201–Thr236. Basic and acidic residues predominate over residues Arg210–Asn235.

Dispensable for normal development and fertility. This is an uncharacterized protein from Homo sapiens (Human).